We begin with the raw amino-acid sequence, 393 residues long: Probable tRNA sulfurtransferase (393 aa).

Residues aspartate 61–glutamate 168 form the THUMP domain. Residues leucine 186–leucine 187, tyrosine 211–phenylalanine 212, arginine 268, glycine 290, and glutamine 299 each bind ATP.

Belongs to the ThiI family.

The protein resides in the cytoplasm. It carries out the reaction [ThiI sulfur-carrier protein]-S-sulfanyl-L-cysteine + a uridine in tRNA + 2 reduced [2Fe-2S]-[ferredoxin] + ATP + H(+) = [ThiI sulfur-carrier protein]-L-cysteine + a 4-thiouridine in tRNA + 2 oxidized [2Fe-2S]-[ferredoxin] + AMP + diphosphate. It catalyses the reaction [ThiS sulfur-carrier protein]-C-terminal Gly-Gly-AMP + S-sulfanyl-L-cysteinyl-[cysteine desulfurase] + AH2 = [ThiS sulfur-carrier protein]-C-terminal-Gly-aminoethanethioate + L-cysteinyl-[cysteine desulfurase] + A + AMP + 2 H(+). It functions in the pathway cofactor biosynthesis; thiamine diphosphate biosynthesis. Catalyzes the ATP-dependent transfer of a sulfur to tRNA to produce 4-thiouridine in position 8 of tRNAs, which functions as a near-UV photosensor. Also catalyzes the transfer of sulfur to the sulfur carrier protein ThiS, forming ThiS-thiocarboxylate. This is a step in the synthesis of thiazole, in the thiamine biosynthesis pathway. The sulfur is donated as persulfide by IscS. The protein is Probable tRNA sulfurtransferase of Lachnospira eligens (strain ATCC 27750 / DSM 3376 / VPI C15-48 / C15-B4) (Eubacterium eligens).